A 142-amino-acid polypeptide reads, in one-letter code: Large-conductance mechanosensitive channel (142 aa).

3 helical membrane passes run 19 to 39 (VGII…ADLV), 41 to 61 (PFIA…ALDG), and 78 to 98 (FAFG…FVVF).

Belongs to the MscL family. Homopentamer.

It localises to the cell inner membrane. Its function is as follows. Channel that opens in response to stretch forces in the membrane lipid bilayer. May participate in the regulation of osmotic pressure changes within the cell. This is Large-conductance mechanosensitive channel from Roseobacter denitrificans (strain ATCC 33942 / OCh 114) (Erythrobacter sp. (strain OCh 114)).